Reading from the N-terminus, the 38-residue chain is Potassium channel toxin alpha-KTx 3.7 (38 aa).

Cystine bridges form between Cys8–Cys28, Cys14–Cys33, and Cys18–Cys35.

This sequence belongs to the short scorpion toxin superfamily. Potassium channel inhibitor family. Alpha-KTx 03 subfamily. Expressed by the venom gland.

It localises to the secreted. Its function is as follows. Blocks voltage-gated potassium channels Kv1.1/KCNA1 (IC(50)=0.6 nM), Kv1.2/KCNA2 (IC(50)=5.4 nM), Kv1.3/KCNA3 (IC(50)=0.014 nM) potently, and moderately block intermediate conductance calcium-activated potassium channels KCa3.1/KCNN4 (IC(50)=225 nM). Also shows activity on muscle-type nicotinic acetylcholine receptor (nAChR), since it reversibly and dose-dependently inhibits acetylcholine-induced current through mouse muscle-type nAChR heterologously expressed in Xenopus oocytes (IC(50)=1.6 uM). This is Potassium channel toxin alpha-KTx 3.7 from Orthochirus scrobiculosus (Central Asian scorpion).